The primary structure comprises 293 residues: Acetyl-coenzyme A carboxylase carboxyl transferase subunit beta (293 aa).

The CoA carboxyltransferase N-terminal domain occupies 29–293 (LWVKCSECSQ…GVKELAEANI (265 aa)). Residues cysteine 33, cysteine 36, cysteine 52, and cysteine 55 each contribute to the Zn(2+) site. The segment at 33–55 (CSECSQVAYRKDLISNFNVCSNC) adopts a C4-type zinc-finger fold.

It belongs to the AccD/PCCB family. As to quaternary structure, acetyl-CoA carboxylase is a heterohexamer composed of biotin carboxyl carrier protein (AccB), biotin carboxylase (AccC) and two subunits each of ACCase subunit alpha (AccA) and ACCase subunit beta (AccD). It depends on Zn(2+) as a cofactor.

It is found in the cytoplasm. It catalyses the reaction N(6)-carboxybiotinyl-L-lysyl-[protein] + acetyl-CoA = N(6)-biotinyl-L-lysyl-[protein] + malonyl-CoA. The protein operates within lipid metabolism; malonyl-CoA biosynthesis; malonyl-CoA from acetyl-CoA: step 1/1. Component of the acetyl coenzyme A carboxylase (ACC) complex. Biotin carboxylase (BC) catalyzes the carboxylation of biotin on its carrier protein (BCCP) and then the CO(2) group is transferred by the transcarboxylase to acetyl-CoA to form malonyl-CoA. The protein is Acetyl-coenzyme A carboxylase carboxyl transferase subunit beta of Prochlorococcus marinus (strain MIT 9312).